Consider the following 426-residue polypeptide: Putative phosphate permease CT_962 (426 aa).

Helical transmembrane passes span 1 to 21, 37 to 57, 83 to 103, 104 to 124, 140 to 160, 183 to 203, 207 to 227, 260 to 280, 309 to 329, 365 to 385, and 399 to 419; these read MWLLLVCVVVGGFYTAWNIGA, LTLKQAVLIAAVFEFLGAVLL, VFGMTAALLATGVWLQIASFC, GWPVSTTHAIVGAVLGFGIIL, VSWLASPIIGGYFAFLIFSFI, AIIIFALGLVLILSGAVAPVI, PALRIVCGLSLFAFFFTIWGI, LIVERIFAYLQMIIACFMSFA, VLLVFMSLGGLGLVCGLATWG, LGFPISTTHVVVGSVLGIGFA, and IVLSWFITVPAGAALSIVFFL.

Belongs to the inorganic phosphate transporter (PiT) (TC 2.A.20) family.

The protein localises to the cell membrane. In terms of biological role, potential transporter for phosphate. The chain is Putative phosphate permease CT_962 from Chlamydia trachomatis serovar D (strain ATCC VR-885 / DSM 19411 / UW-3/Cx).